A 383-amino-acid chain; its full sequence is MDALEITQKLISYPTITPKECGIFEYIKSLFPTFKTLECGENGVKNLFLYRIFNPPKEHIKGKHAKENVKPLHFCFAGHIDVVPPGDNWQSDPFKPIIKEGFLYGRGAQDMKGGVGAFLSASLNFNPKTPFLLSMLLTSDEEGPGIFGTKLMLEKLKEKDLLPHMAIVAEPTCEKVLGDSIKIGRRGSINGKLILKGVQGHVAYPKKCQNPIDTLASVLPLISGVHLDDGDECFDPSKLVITNLHAGLGANNVTPASVEIIFNARHSLKTTKESLKEYLEKVLKDLPHTLELESSSSPFITASHSKLTSVLKENILKTCRTTPLLNTKGGTSDARFFSAHGIEVVEFGAINDRIHAIDERVSLKELELLEKVFLGVLEGLSEA.

H79 contacts Zn(2+). D81 is an active-site residue. D110 provides a ligand contact to Zn(2+). E141 functions as the Proton acceptor in the catalytic mechanism. Zn(2+) is bound by residues E142, E170, and H355.

Belongs to the peptidase M20A family. DapE subfamily. In terms of assembly, homodimer. Requires Zn(2+) as cofactor. Co(2+) is required as a cofactor.

The enzyme catalyses N-succinyl-(2S,6S)-2,6-diaminopimelate + H2O = (2S,6S)-2,6-diaminopimelate + succinate. It participates in amino-acid biosynthesis; L-lysine biosynthesis via DAP pathway; LL-2,6-diaminopimelate from (S)-tetrahydrodipicolinate (succinylase route): step 3/3. Its function is as follows. Catalyzes the hydrolysis of N-succinyl-L,L-diaminopimelic acid (SDAP), forming succinate and LL-2,6-diaminopimelate (DAP), an intermediate involved in the bacterial biosynthesis of lysine and meso-diaminopimelic acid, an essential component of bacterial cell walls. The protein is Succinyl-diaminopimelate desuccinylase of Helicobacter pylori (strain P12).